The following is a 119-amino-acid chain: Protein TusC (119 aa).

The protein belongs to the DsrF/TusC family. Heterohexamer, formed by a dimer of trimers. The hexameric TusBCD complex contains 2 copies each of TusB, TusC and TusD. The TusBCD complex interacts with TusE.

The protein localises to the cytoplasm. Its function is as follows. Part of a sulfur-relay system required for 2-thiolation of 5-methylaminomethyl-2-thiouridine (mnm(5)s(2)U) at tRNA wobble positions. The polypeptide is Protein TusC (Escherichia coli O127:H6 (strain E2348/69 / EPEC)).